The primary structure comprises 130 residues: Small ribosomal subunit protein uS9 (130 aa).

Belongs to the universal ribosomal protein uS9 family.

The sequence is that of Small ribosomal subunit protein uS9 from Streptococcus equi subsp. zooepidemicus (strain H70).